The following is a 175-amino-acid chain: ATP synthase subunit b (175 aa).

A helical membrane pass occupies residues 18 to 38 (VTSWEPFVANLIAFILMVVIL).

The protein belongs to the ATPase B chain family. As to quaternary structure, F-type ATPases have 2 components, F(1) - the catalytic core - and F(0) - the membrane proton channel. F(1) has five subunits: alpha(3), beta(3), gamma(1), delta(1), epsilon(1). F(0) has three main subunits: a(1), b(2) and c(10-14). The alpha and beta chains form an alternating ring which encloses part of the gamma chain. F(1) is attached to F(0) by a central stalk formed by the gamma and epsilon chains, while a peripheral stalk is formed by the delta and b chains.

The protein resides in the cell inner membrane. F(1)F(0) ATP synthase produces ATP from ADP in the presence of a proton or sodium gradient. F-type ATPases consist of two structural domains, F(1) containing the extramembraneous catalytic core and F(0) containing the membrane proton channel, linked together by a central stalk and a peripheral stalk. During catalysis, ATP synthesis in the catalytic domain of F(1) is coupled via a rotary mechanism of the central stalk subunits to proton translocation. Its function is as follows. Component of the F(0) channel, it forms part of the peripheral stalk, linking F(1) to F(0). This chain is ATP synthase subunit b, found in Akkermansia muciniphila (strain ATCC BAA-835 / DSM 22959 / JCM 33894 / BCRC 81048 / CCUG 64013 / CIP 107961 / Muc).